We begin with the raw amino-acid sequence, 552 residues long: Serine palmitoyltransferase 3 (552 aa).

Residues 1–29 form a disordered region; it reads MANPGGGAVCNGKLHNHKKQSNGSQSRNC. The chain crosses the membrane as a helical span at residues 59–79; it reads PLHVMVFTYMGYGIGTLFGYL. Lysine 371 bears the N6-(pyridoxal phosphate)lysine mark.

It belongs to the class-II pyridoxal-phosphate-dependent aminotransferase family. Component of the serine palmitoyltransferase (SPT) complex, which is composed of SPTLC1, SPTLC2 or SPTLC3 and SPTSSA or SPTSSB. The heterodimer consisting of SPTLC1 and SPTLC2/SPTLC3 forms the catalytic core of the enzyme, while SPTSSA or SPTSSB subunits determine substrate specificity. SPT also interacts with ORMDL proteins, especially ORMDL3, which negatively regulate SPT activity in the presence of ceramides. The cofactor is pyridoxal 5'-phosphate. In terms of tissue distribution, expressed in most tissues, except peripheral blood cells and bone marrow, with highest levels in heart, kidney, liver, uterus and skin.

Its subcellular location is the endoplasmic reticulum membrane. It catalyses the reaction L-serine + hexadecanoyl-CoA + H(+) = 3-oxosphinganine + CO2 + CoA. It carries out the reaction dodecanoyl-CoA + L-serine + H(+) = 3-oxotetradecasphinganine + CO2 + CoA. The catalysed reaction is tetradecanoyl-CoA + L-serine + H(+) = 3-oxohexadecasphinganine + CO2 + CoA. The enzyme catalyses octadecanoyl-CoA + L-serine + H(+) = 3-oxoeicosasphinganine + CO2 + CoA. The protein operates within lipid metabolism; sphingolipid metabolism. With respect to regulation, SPT complex catalytic activity is negatively regulated by ORMDL proteins, including ORMDL3, in the presence of ceramides. This mechanism allows to maintain ceramide levels at sufficient concentrations for the production of complex sphingolipids, but which prevents the accumulation of ceramides to levels that trigger apoptosis. Component of the serine palmitoyltransferase multisubunit enzyme (SPT) that catalyzes the initial and rate-limiting step in sphingolipid biosynthesis by condensing L-serine and activated acyl-CoA (most commonly palmitoyl-CoA) to form long-chain bases. The SPT complex is composed of SPTLC1, SPTLC2 or SPTLC3 and SPTSSA or SPTSSB. Within this complex, the heterodimer consisting of SPTLC1 and SPTLC2/SPTLC3 forms the catalytic core. The composition of the serine palmitoyltransferase (SPT) complex determines the substrate preference. The SPTLC1-SPTLC2-SPTSSA complex shows a strong preference for C16-CoA substrate, while the SPTLC1-SPTLC3-SPTSSA isozyme uses both C14-CoA and C16-CoA as substrates, with a slight preference for C14-CoA. The SPTLC1-SPTLC2-SPTSSB complex shows a strong preference for C18-CoA substrate, while the SPTLC1-SPTLC3-SPTSSB isozyme displays an ability to use a broader range of acyl-CoAs, without apparent preference. The sequence is that of Serine palmitoyltransferase 3 from Homo sapiens (Human).